The sequence spans 84 residues: Control protein C.SmaI (84 aa).

The region spanning 19–73 is the HTH cro/C1-type domain; sequence VRSYRNINNLSQEQLAEISGLHRTYIGSVERKERNVTLSTLIILAKALNTSVPKL. Positions 30–49 form a DNA-binding region, H-T-H motif; sequence QEQLAEISGLHRTYIGSVER.

May control expression of its associated restriction-modification system SmaI. The chain is Control protein C.SmaI from Serratia marcescens.